Reading from the N-terminus, the 247-residue chain is 2,3-bisphosphoglycerate-dependent phosphoglycerate mutase (247 aa).

Substrate contacts are provided by residues 8–15, 21–22, R60, 87–90, K98, 114–115, and 183–184; these read RHGESQWN, TG, ERHY, RR, and GN. Residue H9 is the Tele-phosphohistidine intermediate of the active site. E87 serves as the catalytic Proton donor/acceptor.

This sequence belongs to the phosphoglycerate mutase family. BPG-dependent PGAM subfamily.

It carries out the reaction (2R)-2-phosphoglycerate = (2R)-3-phosphoglycerate. It functions in the pathway carbohydrate degradation; glycolysis; pyruvate from D-glyceraldehyde 3-phosphate: step 3/5. Catalyzes the interconversion of 2-phosphoglycerate and 3-phosphoglycerate. This is 2,3-bisphosphoglycerate-dependent phosphoglycerate mutase from Chlorobium phaeobacteroides (strain BS1).